The primary structure comprises 265 residues: Insulin-like growth factor-binding protein 2-B (265 aa).

An N-terminal signal peptide occupies residues 1–17 (MSLALLCSLLLVHGSLG). The IGFBP N-terminal domain occupies 19–99 (IVFRCPSCTA…IQGLGRCENK (81 aa)). 6 cysteine pairs are disulfide-bonded: cysteine 23-cysteine 49, cysteine 26-cysteine 51, cysteine 34-cysteine 52, cysteine 41-cysteine 55, cysteine 63-cysteine 76, and cysteine 70-cysteine 96. Polar residues predominate over residues 107–122 (TNQESAAHSGEVNGTR). 2 disordered regions span residues 107 to 128 (TNQESAAHSGEVNGTRSPPMKK) and 144 to 170 (HHNNKRTRMYNTQDDPKTPHPKQSQCQ). In terms of domain architecture, Thyroglobulin type-1 spans 166–248 (QSQCQQELDK…SDKVRGDPNC (83 aa)). 3 disulfides stabilise this stretch: cysteine 169–cysteine 203, cysteine 214–cysteine 225, and cysteine 227–cysteine 248. Residues 238–265 (SSDKVRGDPNCSQYYGGPELEPPTAQQK) form a disordered region. Residues 243–245 (RGD) carry the Cell attachment site motif.

In terms of assembly, interacts with igf2. Interacts with igf1. In early embryos, expressed at a low level in most tissues with expression becoming abundant in the liver by 96 hours post-fertilization (hpf). The expression pattern in adults exhibits sexual dimorphism; in adult males expression is limited exclusively to the liver whereas in adult females expression is observed in the liver and other tissues including the gut, kidney, ovary and muscle.

The protein localises to the secreted. Functionally, IGF-binding proteins prolong the half-life of the IGFs and have been shown to either inhibit or stimulate the growth promoting effects of the IGFs on cell culture. They alter the interaction of IGFs with their cell surface receptors. This Danio rerio (Zebrafish) protein is Insulin-like growth factor-binding protein 2-B.